The chain runs to 445 residues: Cytoplasmic tRNA 2-thiolation protein 2 (445 aa).

Over residues methionine 1–aspartate 11 the composition is skewed to acidic residues. A disordered region spans residues methionine 1–glutamate 26. Over residues glycine 13–serine 22 the composition is skewed to basic and acidic residues.

The protein belongs to the CTU2/NCS2 family.

The protein resides in the cytoplasm. It functions in the pathway tRNA modification; 5-methoxycarbonylmethyl-2-thiouridine-tRNA biosynthesis. In terms of biological role, plays a central role in 2-thiolation of mcm(5)S(2)U at tRNA wobble positions of tRNA(Lys), tRNA(Glu) and tRNA(Gln). May act by forming a heterodimer with NCS6/CTU1 that ligates sulfur from thiocarboxylated URM1 onto the uridine of tRNAs at wobble position. This is Cytoplasmic tRNA 2-thiolation protein 2 from Aedes aegypti (Yellowfever mosquito).